The following is a 358-amino-acid chain: Cilia- and flagella-associated protein 263 (358 aa).

3 coiled-coil regions span residues 93-138 (YKKM…FKRN), 176-200 (RKNS…EMAE), and 266-343 (RTKL…YTKS).

It belongs to the CFAP263 family. Forms a complex with CFAP184; the interaction is required for functional activity in cilia. Interacts with HAP1 and PCM1.

Its subcellular location is the cytoplasm. The protein localises to the cytoskeleton. It localises to the microtubule organizing center. The protein resides in the centrosome. It is found in the centriolar satellite. Its subcellular location is the cell projection. The protein localises to the cilium. Functionally, component of centriolar satellites contributing to primary cilium formation. In complex with CFAP263, acts as a regulator of ciliary beating that connects radial spoke 3 (RS3) to the inner dynein arm (IDA) and the nexin-dynein regulatory complex (N-DRC). The complex is positioned parallel to N-DRC and forms a connection between the arch at the base of RS3, the IDA tail and N-DRC. The chain is Cilia- and flagella-associated protein 263 (cfap263) from Danio rerio (Zebrafish).